We begin with the raw amino-acid sequence, 449 residues long: Na(+)-translocating NADH-quinone reductase subunit A (449 aa).

Belongs to the NqrA family. In terms of assembly, composed of six subunits; NqrA, NqrB, NqrC, NqrD, NqrE and NqrF.

The catalysed reaction is a ubiquinone + n Na(+)(in) + NADH + H(+) = a ubiquinol + n Na(+)(out) + NAD(+). Functionally, NQR complex catalyzes the reduction of ubiquinone-1 to ubiquinol by two successive reactions, coupled with the transport of Na(+) ions from the cytoplasm to the periplasm. NqrA to NqrE are probably involved in the second step, the conversion of ubisemiquinone to ubiquinol. This is Na(+)-translocating NADH-quinone reductase subunit A from Serratia proteamaculans (strain 568).